Here is a 471-residue protein sequence, read N- to C-terminus: Ubiquitin-conjugating enzyme E2 variant 3 (471 aa).

A UEV domain is found at 2–145 (EFDCEGLRRL…QEELPMYSLS (144 aa)). NAD(+) is bound at residue 191–219 (GELGIACTLAISAKGIADRLVLLDLSEGT).

This sequence in the N-terminal section; belongs to the ubiquitin-conjugating enzyme family. UEV subfamily. In the C-terminal section; belongs to the LDH/MDH superfamily. As to quaternary structure, homodimer. In terms of tissue distribution, colon, colon carcinoma cell lines, normal cervical epithelium, carcinomas of the uterine cervix and peripheral blood leukocytes.

In terms of biological role, possible negative regulator of polyubiquitination. In Homo sapiens (Human), this protein is Ubiquitin-conjugating enzyme E2 variant 3.